The primary structure comprises 236 residues: 2-C-methyl-D-erythritol 4-phosphate cytidylyltransferase (236 aa).

It belongs to the IspD/TarI cytidylyltransferase family. IspD subfamily.

It carries out the reaction 2-C-methyl-D-erythritol 4-phosphate + CTP + H(+) = 4-CDP-2-C-methyl-D-erythritol + diphosphate. It participates in isoprenoid biosynthesis; isopentenyl diphosphate biosynthesis via DXP pathway; isopentenyl diphosphate from 1-deoxy-D-xylulose 5-phosphate: step 2/6. Its function is as follows. Catalyzes the formation of 4-diphosphocytidyl-2-C-methyl-D-erythritol from CTP and 2-C-methyl-D-erythritol 4-phosphate (MEP). The chain is 2-C-methyl-D-erythritol 4-phosphate cytidylyltransferase from Burkholderia multivorans (strain ATCC 17616 / 249).